A 202-amino-acid chain; its full sequence is NAD(P)H dehydrogenase (quinone) 2 (202 aa).

The Flavodoxin-like domain occupies 4-190 (VLVLYYSSYG…AGAFHQGEIV (187 aa)). Residues 10–15 (SSYGHI) and 78–80 (TRF) each bind FMN. Residue Tyr-12 participates in NAD(+) binding. Trp-98 contacts substrate. Residues 113 to 119 (STGTQHG) and His-134 each bind FMN.

This sequence belongs to the WrbA family. FMN serves as cofactor.

It carries out the reaction a quinone + NADH + H(+) = a quinol + NAD(+). It catalyses the reaction a quinone + NADPH + H(+) = a quinol + NADP(+). The chain is NAD(P)H dehydrogenase (quinone) 2 from Rhizobium meliloti (strain 1021) (Ensifer meliloti).